The primary structure comprises 115 residues: Large ribosomal subunit protein uL22 (115 aa).

Belongs to the universal ribosomal protein uL22 family. In terms of assembly, part of the 50S ribosomal subunit.

Its function is as follows. This protein binds specifically to 23S rRNA; its binding is stimulated by other ribosomal proteins, e.g. L4, L17, and L20. It is important during the early stages of 50S assembly. It makes multiple contacts with different domains of the 23S rRNA in the assembled 50S subunit and ribosome. In terms of biological role, the globular domain of the protein is located near the polypeptide exit tunnel on the outside of the subunit, while an extended beta-hairpin is found that lines the wall of the exit tunnel in the center of the 70S ribosome. In Lactococcus lactis subsp. lactis (strain IL1403) (Streptococcus lactis), this protein is Large ribosomal subunit protein uL22.